The primary structure comprises 400 residues: Argininosuccinate synthase (400 aa).

Position 10–18 (10–18 (AFSGGLDTT)) interacts with ATP. L-citrulline is bound at residue Y87. Position 117 (G117) interacts with ATP. T119, N123, and D124 together coordinate L-aspartate. Position 123 (N123) interacts with L-citrulline. Residues R127, S173, S182, E255, and Y267 each coordinate L-citrulline.

Belongs to the argininosuccinate synthase family. Type 1 subfamily. In terms of assembly, homotetramer.

It localises to the cytoplasm. The catalysed reaction is L-citrulline + L-aspartate + ATP = 2-(N(omega)-L-arginino)succinate + AMP + diphosphate + H(+). It participates in amino-acid biosynthesis; L-arginine biosynthesis; L-arginine from L-ornithine and carbamoyl phosphate: step 2/3. The chain is Argininosuccinate synthase from Natronomonas pharaonis (strain ATCC 35678 / DSM 2160 / CIP 103997 / JCM 8858 / NBRC 14720 / NCIMB 2260 / Gabara) (Halobacterium pharaonis).